A 239-amino-acid polypeptide reads, in one-letter code: Ribosomal RNA small subunit methyltransferase G (239 aa).

S-adenosyl-L-methionine is bound by residues Gly79, Phe84, 130–131, and Arg149; that span reads AE.

This sequence belongs to the methyltransferase superfamily. RNA methyltransferase RsmG family.

It localises to the cytoplasm. Its function is as follows. Specifically methylates the N7 position of a guanine in 16S rRNA. The chain is Ribosomal RNA small subunit methyltransferase G from Lactobacillus johnsonii (strain CNCM I-12250 / La1 / NCC 533).